Consider the following 166-residue polypeptide: Flagellar protein LafL (166 aa).

The helical transmembrane segment at 6–26 (MIAMFIAMIITSALVSAATIM) threads the bilayer.

This sequence belongs to the FliL family.

It is found in the cell inner membrane. Controls the rotational direction of flagella during chemotaxis. In Vibrio parahaemolyticus serotype O3:K6 (strain RIMD 2210633), this protein is Flagellar protein LafL (lafL).